We begin with the raw amino-acid sequence, 122 residues long: Small ribosomal subunit protein uS13 (122 aa).

Positions 95–122 (GLPVRGQRTHTNARTRKGPRRGTVGKKK) are disordered.

The protein belongs to the universal ribosomal protein uS13 family. In terms of assembly, part of the 30S ribosomal subunit. Forms a loose heterodimer with protein S19. Forms two bridges to the 50S subunit in the 70S ribosome.

Its function is as follows. Located at the top of the head of the 30S subunit, it contacts several helices of the 16S rRNA. In the 70S ribosome it contacts the 23S rRNA (bridge B1a) and protein L5 of the 50S subunit (bridge B1b), connecting the 2 subunits; these bridges are implicated in subunit movement. Contacts the tRNAs in the A and P-sites. The protein is Small ribosomal subunit protein uS13 of Nitratidesulfovibrio vulgaris (strain ATCC 29579 / DSM 644 / CCUG 34227 / NCIMB 8303 / VKM B-1760 / Hildenborough) (Desulfovibrio vulgaris).